The following is a 224-amino-acid chain: Phosphoribosylformylglycinamidine synthase subunit PurQ (224 aa).

The Glutamine amidotransferase type-1 domain maps to arginine 4–glycine 224. The active-site Nucleophile is the cysteine 87. Active-site residues include histidine 195 and glutamate 197.

Part of the FGAM synthase complex composed of 1 PurL, 1 PurQ and 2 PurS subunits.

It localises to the cytoplasm. The enzyme catalyses N(2)-formyl-N(1)-(5-phospho-beta-D-ribosyl)glycinamide + L-glutamine + ATP + H2O = 2-formamido-N(1)-(5-O-phospho-beta-D-ribosyl)acetamidine + L-glutamate + ADP + phosphate + H(+). It catalyses the reaction L-glutamine + H2O = L-glutamate + NH4(+). Its pathway is purine metabolism; IMP biosynthesis via de novo pathway; 5-amino-1-(5-phospho-D-ribosyl)imidazole from N(2)-formyl-N(1)-(5-phospho-D-ribosyl)glycinamide: step 1/2. Functionally, part of the phosphoribosylformylglycinamidine synthase complex involved in the purines biosynthetic pathway. Catalyzes the ATP-dependent conversion of formylglycinamide ribonucleotide (FGAR) and glutamine to yield formylglycinamidine ribonucleotide (FGAM) and glutamate. The FGAM synthase complex is composed of three subunits. PurQ produces an ammonia molecule by converting glutamine to glutamate. PurL transfers the ammonia molecule to FGAR to form FGAM in an ATP-dependent manner. PurS interacts with PurQ and PurL and is thought to assist in the transfer of the ammonia molecule from PurQ to PurL. The sequence is that of Phosphoribosylformylglycinamidine synthase subunit PurQ from Mycobacterium bovis (strain ATCC BAA-935 / AF2122/97).